Reading from the N-terminus, the 880-residue chain is 3-isopropylmalate dehydratase large subunit gloJ (880 aa).

The [4Fe-4S] cluster site is built by Cys457, Cys520, and Cys523.

This sequence belongs to the aconitase/IPM isomerase family. LeuC type 2 subfamily. Requires [4Fe-4S] cluster as cofactor.

The enzyme catalyses (2R,3S)-3-isopropylmalate = (2S)-2-isopropylmalate. The protein operates within mycotoxin biosynthesis. In terms of biological role, 3-isopropylmalate dehydratase large subunit; part of the gene cluster that mediates the biosynthesis of pneumocandins, lipohexapeptides of the echinocandin family that prevent fungal cell wall formation by non-competitive inhibition of beta-1,3-glucan synthase. The 10,12-dimethylmyristoyl side chain is synthesized by the reducing polyketide synthase gloL/GLPKS4. The thioesterase gloN/GLHYD exclusively interacts with gloL/GLPKS4 to maintain turnover of the polyketide side chain. The 10R,12S-dimethylmyristic acid is then transferred to the first thiolation domain of the nonribosomal peptide synthetase gloA/GLNRPS4 by the acyl-AMP ligase gloD/GLligase, followed by its acylation to L-ornithine to trigger elongation of the cyclic hexapeptide. L-ornithine, 4R-hydroxyl-L-proline (generated from L-proline by the dioxygenase gloF/GLOXY2), 3S-hydroxyl-L-homotyrosine (generated by gloG/GLHtyB, gloH/GLHtyA, gloI/GLHtyC, gloJ/GLHtyD and hydroxylated at C-3 by the dioxygenase gloM/GLOXY1), 3R-hydroxyl-L-glutamine (generated from L-glutamine probably by the dioxygenase gloE/GLOXY3) and 3S-hydroxyl-L-proline (generated from L-proline by the dioxygenase gloF/GLOXY2 to yield pneumocandin B0), or 3S-hydroxyl-4S-methyl-L-proline (generated from L-leucine by the dioxygenase gloC/GLOXY4 to yield pneumocandin A0) are sequentially added to the growing chain. The last C domain of gloA/GLNRPS4 is proposed to be responsible for cyclization by condensation to form the peptide bond between L-ornithine and 3S-hydroxyl-4S-methyl-L-proline (for pneumocandin A0) or 3S-hydroxyl-L-proline (for pneumocandin B0). Finally, the subsequent C-4 hydroxylation of 3S-hydroxyl-L-homotyrosine and L-ornithine dihydroxylation at C-4 and C-5 are performed by the cytochrome P450 monooxygenases gloP/GLP450-1 and gloO/GLP450-2, respectively. The sequence is that of 3-isopropylmalate dehydratase large subunit gloJ from Glarea lozoyensis (strain ATCC 20868 / MF5171).